We begin with the raw amino-acid sequence, 333 residues long: Probable cytosolic iron-sulfur protein assembly protein ciao1 (333 aa).

WD repeat units follow at residues 14–53 (HPDSRCWFLAWNPSGTLLASCGGDRTIRIWGKDGDNWVCK), 59–98 (GHQRTVRKVSWSPCGNYLASASFDATTCIWMKKKEEFECI), 103–142 (GHENEVKSVAWAPSGSLLATCSRDKSVWVWEVDEEEEYEC), 148–187 (SHTQDVKHVVWHPNQELLASASYDDSVKLYREEEDDWVCC), 192–231 (GHTSTVWSLAFDQTGEQLATCSDDKTVRIWRQLGTGEQGS), 246–285 (YHTRTVYDVNWNHLTGAIATACGDDAVRIFEEDPGSDPLQ), and 297–333 (AHTQDVNCVTWHPKEPNLLASCSDDGEMAFWRYQKPE).

It belongs to the WD repeat CIA1 family. As to quaternary structure, component of the CIA complex.

Key component of the cytosolic iron-sulfur protein assembly (CIA) complex, a multiprotein complex that mediates the incorporation of iron-sulfur cluster into extramitochondrial Fe/S proteins. This chain is Probable cytosolic iron-sulfur protein assembly protein ciao1 (ciao1), found in Xenopus tropicalis (Western clawed frog).